A 502-amino-acid polypeptide reads, in one-letter code: Probable malate:quinone oxidoreductase (502 aa).

It belongs to the MQO family. It depends on FAD as a cofactor.

The catalysed reaction is (S)-malate + a quinone = a quinol + oxaloacetate. It participates in carbohydrate metabolism; tricarboxylic acid cycle; oxaloacetate from (S)-malate (quinone route): step 1/1. The sequence is that of Probable malate:quinone oxidoreductase from Synechococcus sp. (strain CC9605).